The chain runs to 341 residues: uncharacterized protein (341 aa).

The protein belongs to the Gfo/Idh/MocA family.

This is an uncharacterized protein from Bacillus subtilis (strain 168).